The sequence spans 179 residues: Large ribosomal subunit protein uL5 (179 aa).

This sequence belongs to the universal ribosomal protein uL5 family. In terms of assembly, part of the 50S ribosomal subunit; part of the 5S rRNA/L5/L18/L25 subcomplex. Contacts the 5S rRNA and the P site tRNA. Forms a bridge to the 30S subunit in the 70S ribosome.

Its function is as follows. This is one of the proteins that bind and probably mediate the attachment of the 5S RNA into the large ribosomal subunit, where it forms part of the central protuberance. In the 70S ribosome it contacts protein S13 of the 30S subunit (bridge B1b), connecting the 2 subunits; this bridge is implicated in subunit movement. Contacts the P site tRNA; the 5S rRNA and some of its associated proteins might help stabilize positioning of ribosome-bound tRNAs. This chain is Large ribosomal subunit protein uL5, found in Pseudomonas fluorescens (strain SBW25).